We begin with the raw amino-acid sequence, 929 residues long: Formin-like protein 11 (929 aa).

A signal peptide spans 1–28 (MMRHCRREWLLALCLISVQLLIPTGCEG). The segment at 153-215 (ESSTTKSIPE…KSVAEKKKDS (63 aa)) is disordered. Positions 171–189 (KTSTPKPVNKPTDSVSSPP) are enriched in polar residues. The segment covering 191-215 (RSYKSAPTEKENPPTKSVAEKKKDS) has biased composition (basic and acidic residues). A helical transmembrane segment spans residues 222–242 (FIGLSIAGIALMAHLCLCCFM). Disordered stretches follow at residues 372-472 (PVGS…ENSN) and 726-749 (AAKE…SEQT). Residues 382–447 (MQPPVMPPPI…GPPRPPPPAM (66 aa)) are compositionally biased toward pro residues. The 431-residue stretch at 468–898 (VENSNEAKTK…KAKAKQPSQS (431 aa)) folds into the FH2 domain. Residues 738-749 (KTDDLGDKSEQT) show a composition bias toward basic and acidic residues.

The protein belongs to the formin-like family. Class-I subfamily.

The protein localises to the membrane. This chain is Formin-like protein 11 (FH11), found in Oryza sativa subsp. japonica (Rice).